A 250-amino-acid polypeptide reads, in one-letter code: uncharacterized protein (250 aa).

Residues leucine 207–valine 226 show a composition bias toward basic and acidic residues. The tract at residues leucine 207 to serine 250 is disordered. A compositionally biased stretch (low complexity) spans serine 233–serine 250.

It localises to the plastid. Its subcellular location is the chloroplast. This is an uncharacterized protein from Chlorella vulgaris (Green alga).